The following is a 346-amino-acid chain: Dihydroorotase (346 aa).

Positions 13 and 15 each coordinate Zn(2+). Substrate is bound by residues 15 to 17 and Asn-41; that span reads HLR. 3 residues coordinate Zn(2+): Lys-99, His-136, and His-174. N6-carboxylysine is present on Lys-99. A substrate-binding site is contributed by His-136. Leu-219 contacts substrate. Asp-247 contributes to the Zn(2+) binding site. Residue Asp-247 is part of the active site. His-251 and Ala-263 together coordinate substrate.

It belongs to the metallo-dependent hydrolases superfamily. DHOase family. Class II DHOase subfamily. As to quaternary structure, homodimer. Requires Zn(2+) as cofactor.

It catalyses the reaction (S)-dihydroorotate + H2O = N-carbamoyl-L-aspartate + H(+). It participates in pyrimidine metabolism; UMP biosynthesis via de novo pathway; (S)-dihydroorotate from bicarbonate: step 3/3. Functionally, catalyzes the reversible cyclization of carbamoyl aspartate to dihydroorotate. This chain is Dihydroorotase, found in Rhizobium rhizogenes (strain K84 / ATCC BAA-868) (Agrobacterium radiobacter).